The following is a 358-amino-acid chain: CRS2-associated factor 2, mitochondrial (358 aa).

A mitochondrion-targeting transit peptide spans 1–28; the sequence is MLSIRRSLTLAKEPKDLFLFLCNLRARC. The interval 35-64 is disordered; that stretch reads DPPFSPLSKPTKPPKEKKKQKTKKQDQSSE. CRM domains lie at 141–239 and 261–357; these read ETLT…SRPI and DGLE…ELVT.

As to quaternary structure, part of large ribonucleo-protein complexes that include group IIB introns.

It is found in the mitochondrion. In terms of biological role, may be involved in the splicing of group IIB introns in mitochondria. The chain is CRS2-associated factor 2, mitochondrial from Arabidopsis thaliana (Mouse-ear cress).